We begin with the raw amino-acid sequence, 129 residues long: MFIDRLDHLVLTVSDIEKTCNFYENILGMKVITFGKDNERKALTFGNQKINLHKKGAEFEPKALLPTAGSADLCFITITPLHEVITELFQKNITIEEGPCERTGALSKPILSVYIRDPDYNLIEISNYK.

Residues 5 to 128 (RLDHLVLTVS…DYNLIEISNY (124 aa)) enclose the VOC domain.

It belongs to the glyoxalase I family.

This chain is Glyoxalase domain-containing protein 5 homolog (glod5), found in Dictyostelium discoideum (Social amoeba).